The primary structure comprises 383 residues: Cathepsin D (383 aa).

Residues Met-1–Ala-18 form the signal peptide. The propeptide occupies Leu-19 to Asn-48. The Peptidase A1 domain occupies Tyr-63–Ala-378. Asp-81 is an active-site residue. Cys-94 and Cys-101 are joined by a disulfide. Residues Asn-118 and Asn-238 are each glycosylated (N-linked (GlcNAc...) asparagine). A disulfide bond links Cys-259 and Cys-263. Asp-268 is a catalytic residue. Residues Cys-302 and Cys-339 are joined by a disulfide bond. N-linked (GlcNAc...) asparagine glycosylation is present at Asn-310.

Belongs to the peptidase A1 family. Monomer. N-glycosylated on 2 out of the 3 potential sites. Glycans contain sulfated Mannose.

It is found in the lysosome. The protein localises to the secreted. It carries out the reaction Specificity similar to, but narrower than, that of pepsin A. Does not cleave the 4-Gln-|-His-5 bond in B chain of insulin.. In terms of biological role, protease that may act during cell growth and/or development. This chain is Cathepsin D (ctsD), found in Dictyostelium discoideum (Social amoeba).